A 378-amino-acid polypeptide reads, in one-letter code: Putative F-box/kelch-repeat protein At3g43710 (378 aa).

Positions 23–69 (TFGIEMLPDDLVLSCLARVPRMYYPILSLVSKRFRSFLTSTELYQTR) constitute an F-box domain. Kelch repeat units lie at residues 130–176 (NIYV…VLDG), 178–227 (IYVA…GYDG), and 262–308 (SQCV…VPTK).

This chain is Putative F-box/kelch-repeat protein At3g43710, found in Arabidopsis thaliana (Mouse-ear cress).